The following is a 102-amino-acid chain: Large ribosomal subunit protein bL21 (102 aa).

It belongs to the bacterial ribosomal protein bL21 family. Part of the 50S ribosomal subunit. Contacts protein L20.

This protein binds to 23S rRNA in the presence of protein L20. The polypeptide is Large ribosomal subunit protein bL21 (Bacillus subtilis (strain 168)).